A 468-amino-acid chain; its full sequence is Cyclin-dependent kinase 14 (468 aa).

Ser-24, Ser-77, and Ser-94 each carry phosphoserine. The disordered stretch occupies residues 102–131 (FKSSSAGKESPKVRRHSSPSSPTSPKFGKA). Ser-133 carries the post-translational modification Phosphoserine. The region spanning 134 to 418 (YEKLEKLGEG…AQAALSHEYF (285 aa)) is the Protein kinase domain. ATP-binding positions include 140–148 (LGEGSYATV) and Lys-163. Asp-255 functions as the Proton acceptor in the catalytic mechanism. The tract at residues 448–468 (ESMRAFGKNSSYGKSLSNSKH) is disordered. Residues 455-468 (KNSSYGKSLSNSKH) show a composition bias toward polar residues.

The protein belongs to the protein kinase superfamily. CMGC Ser/Thr protein kinase family. CDC2/CDKX subfamily. As to quaternary structure, found in a complex with LRP6, CCNY and CAPRIN2 during G2/M stage; CAPRIN2 functions as a scaffold for the complex by binding to CCNY via its N terminus and to CDK14 via its C terminus. Interacts with CCNY; CCNY mediates its recruitment to the plasma membrane and promotes phosphorylation of LRP6. Interacts with CCDN3 and CDKN1A. Interacts with SEPT8. Interacts with 14-3-3 proteina YWHAB, YWHAE, YWHAH and YWHAQ.

It is found in the cell membrane. It localises to the cytoplasm. Its subcellular location is the nucleus. It catalyses the reaction L-seryl-[protein] + ATP = O-phospho-L-seryl-[protein] + ADP + H(+). It carries out the reaction L-threonyl-[protein] + ATP = O-phospho-L-threonyl-[protein] + ADP + H(+). Its activity is regulated as follows. Serine/threonine-protein kinase activity is promoted by associated cyclins CCDN3 and CCNY and repressed by CDKN1A. Serine/threonine-protein kinase involved in the control of the eukaryotic cell cycle, whose activity is controlled by an associated cyclin. Acts as a cell-cycle regulator of Wnt signaling pathway during G2/M phase by mediating the phosphorylation of LRP6 at 'Ser-1490', leading to the activation of the Wnt signaling pathway. Acts as a regulator of cell cycle progression and cell proliferation via its interaction with CCDN3. Phosphorylates RB1 in vitro, however the relevance of such result remains to be confirmed in vivo. May also play a role in meiosis, neuron differentiation and may indirectly act as a negative regulator of insulin-responsive glucose transport. This chain is Cyclin-dependent kinase 14 (CDK14), found in Oryctolagus cuniculus (Rabbit).